The primary structure comprises 21 residues: Serine protease inhibitor 3 (21 aa).

This sequence belongs to the protease inhibitor I3 (leguminous Kunitz-type inhibitor) family. Tubers.

The protein resides in the vacuole. In terms of biological role, inhibits trypsin and chymotrypsin (serine proteases). Does not inhibit elastase, subtilisin, cathepsin L nor papain (serine and cysteine proteases). Protects the plant by inhibiting proteases of invading organisms, decreasing both hyphal growth and zoospores germination of Phytophthora infestans. The protein is Serine protease inhibitor 3 of Solanum tuberosum (Potato).